The sequence spans 31 residues: Delta-conotoxin-like ErVIA (31 aa).

A propeptide spanning residues 1–4 (LNKR) is cleaved from the precursor. Disulfide bonds link Cys-5–Cys-21, Cys-12–Cys-25, and Cys-20–Cys-29.

It belongs to the conotoxin O1 superfamily. As to expression, expressed by the venom duct.

Its subcellular location is the secreted. Functionally, this toxin activates voltage-gated sodium channels. It shifts the voltage-dependence of activation to more hyperpolarized potentials but has only little effect on channel inactivation. It is active on Nav1.3/SCN3A (EC(50)=3.98 nM), Nav1.4/SCN4A (EC(50)=4.99 nM), Nav1.6/SCN8A (EC(50)=1.27 nM) and Nav1.7/SCN9A (EC(50)=2.42 nM) voltage-gated sodium channels. In vivo, it induces nocifensive or pain-like behaviors in mice when injected intraplantarly. The polypeptide is Delta-conotoxin-like ErVIA (Conus eburneus (Ivory cone)).